The following is a 314-amino-acid chain: Ribosome maturation factor RimP (314 aa).

Disordered stretches follow at residues 1-20, 152-176, and 206-314; these read MDLD…QPLS, PIEA…AKPE, and AAKA…PAPK. The segment covering 10-19 has biased composition (polar residues); that stretch reads PSAQVGQQPL. The span at 215–227 shows a compositional bias: acidic residues; the sequence is DGNNEEQDEEQEE. Over residues 247–256 the composition is skewed to polar residues; that stretch reads PEHNPAQNPI. Composition is skewed to basic and acidic residues over residues 270–279 and 303–314; these read TEFKKSKTGE and SGHDMPRKPAPK.

The protein belongs to the RimP family.

It is found in the cytoplasm. Functionally, required for maturation of 30S ribosomal subunits. In Beijerinckia indica subsp. indica (strain ATCC 9039 / DSM 1715 / NCIMB 8712), this protein is Ribosome maturation factor RimP.